The following is a 187-amino-acid chain: Large ribosomal subunit protein uL22B (187 aa).

The protein belongs to the universal ribosomal protein uL22 family. Component of the large ribosomal subunit (LSU). Mature yeast ribosomes consist of a small (40S) and a large (60S) subunit. The 40S small subunit contains 1 molecule of ribosomal RNA (18S rRNA) and at least 33 different proteins. The large 60S subunit contains 3 rRNA molecules (25S, 5.8S and 5S rRNA) and at least 46 different proteins. uL22 is associated with the polypeptide exit tunnel.

It localises to the cytoplasm. Component of the ribosome, a large ribonucleoprotein complex responsible for the synthesis of proteins in the cell. The small ribosomal subunit (SSU) binds messenger RNAs (mRNAs) and translates the encoded message by selecting cognate aminoacyl-transfer RNA (tRNA) molecules. The large subunit (LSU) contains the ribosomal catalytic site termed the peptidyl transferase center (PTC), which catalyzes the formation of peptide bonds, thereby polymerizing the amino acids delivered by tRNAs into a polypeptide chain. The nascent polypeptides leave the ribosome through a tunnel in the LSU and interact with protein factors that function in enzymatic processing, targeting, and the membrane insertion of nascent chains at the exit of the ribosomal tunnel. This is Large ribosomal subunit protein uL22B (rpl1702) from Schizosaccharomyces pombe (strain 972 / ATCC 24843) (Fission yeast).